Reading from the N-terminus, the 267-residue chain is 4-hydroxy-tetrahydrodipicolinate reductase (267 aa).

Gly-10–Met-15 contacts NAD(+). Arg-37 contacts NADP(+). NAD(+) contacts are provided by residues Gly-98–Thr-100 and Ala-122–Tyr-125. The active-site Proton donor/acceptor is the His-155. Residue His-156 coordinates (S)-2,3,4,5-tetrahydrodipicolinate. Lys-159 acts as the Proton donor in catalysis. Gly-165 to Thr-166 provides a ligand contact to (S)-2,3,4,5-tetrahydrodipicolinate.

The protein belongs to the DapB family.

It is found in the cytoplasm. It catalyses the reaction (S)-2,3,4,5-tetrahydrodipicolinate + NAD(+) + H2O = (2S,4S)-4-hydroxy-2,3,4,5-tetrahydrodipicolinate + NADH + H(+). The catalysed reaction is (S)-2,3,4,5-tetrahydrodipicolinate + NADP(+) + H2O = (2S,4S)-4-hydroxy-2,3,4,5-tetrahydrodipicolinate + NADPH + H(+). It functions in the pathway amino-acid biosynthesis; L-lysine biosynthesis via DAP pathway; (S)-tetrahydrodipicolinate from L-aspartate: step 4/4. Its function is as follows. Catalyzes the conversion of 4-hydroxy-tetrahydrodipicolinate (HTPA) to tetrahydrodipicolinate. The protein is 4-hydroxy-tetrahydrodipicolinate reductase of Pseudoalteromonas translucida (strain TAC 125).